We begin with the raw amino-acid sequence, 366 residues long: Anhydro-N-acetylmuramic acid kinase (366 aa).

ATP is bound at residue 10 to 17 (GTSMDGID).

The protein belongs to the anhydro-N-acetylmuramic acid kinase family.

The enzyme catalyses 1,6-anhydro-N-acetyl-beta-muramate + ATP + H2O = N-acetyl-D-muramate 6-phosphate + ADP + H(+). Its pathway is amino-sugar metabolism; 1,6-anhydro-N-acetylmuramate degradation. The protein operates within cell wall biogenesis; peptidoglycan recycling. Catalyzes the specific phosphorylation of 1,6-anhydro-N-acetylmuramic acid (anhMurNAc) with the simultaneous cleavage of the 1,6-anhydro ring, generating MurNAc-6-P. Is required for the utilization of anhMurNAc either imported from the medium or derived from its own cell wall murein, and thus plays a role in cell wall recycling. This chain is Anhydro-N-acetylmuramic acid kinase, found in Legionella pneumophila (strain Lens).